A 181-amino-acid polypeptide reads, in one-letter code: 6,7-dimethyl-8-ribityllumazine synthase 2 (181 aa).

Positions M1–S23 are disordered. 5-amino-6-(D-ribitylamino)uracil-binding positions include W40, S74–E76, L98–V100, and S129.

Belongs to the DMRL synthase family.

The catalysed reaction is (2S)-2-hydroxy-3-oxobutyl phosphate + 5-amino-6-(D-ribitylamino)uracil = 6,7-dimethyl-8-(1-D-ribityl)lumazine + phosphate + 2 H2O + H(+). Its pathway is cofactor biosynthesis; riboflavin biosynthesis; riboflavin from 2-hydroxy-3-oxobutyl phosphate and 5-amino-6-(D-ribitylamino)uracil: step 1/2. Functionally, catalyzes the formation of 6,7-dimethyl-8-ribityllumazine by condensation of 5-amino-6-(D-ribitylamino)uracil with 3,4-dihydroxy-2-butanone 4-phosphate. This is the penultimate step in the biosynthesis of riboflavin. The chain is 6,7-dimethyl-8-ribityllumazine synthase 2 from Rhodopseudomonas palustris (strain ATCC BAA-98 / CGA009).